The chain runs to 80 residues: MKSGIHPNYVATTVVCGCGNTFETHSTKETGRINVEVCSQCHPFYTGKQKILDTGGRVARFEARYGKRAGKGAAKESAES.

Residues Cys16, Cys18, Cys38, and Cys41 each contribute to the Zn(2+) site.

The protein belongs to the bacterial ribosomal protein bL31 family. Type A subfamily. In terms of assembly, part of the 50S ribosomal subunit. The cofactor is Zn(2+).

Binds the 23S rRNA. This is Large ribosomal subunit protein bL31 from Rhodococcus jostii (strain RHA1).